The sequence spans 188 residues: UPF0301 protein XOO1309 (188 aa).

This sequence belongs to the UPF0301 (AlgH) family.

In Xanthomonas oryzae pv. oryzae (strain MAFF 311018), this protein is UPF0301 protein XOO1309.